Consider the following 296-residue polypeptide: 4-hydroxy-tetrahydrodipicolinate synthase (296 aa).

Threonine 49 is a pyruvate binding site. Tyrosine 137 acts as the Proton donor/acceptor in catalysis. Residue lysine 165 is the Schiff-base intermediate with substrate of the active site. Residue valine 207 participates in pyruvate binding.

Belongs to the DapA family. Homotetramer; dimer of dimers.

It localises to the cytoplasm. It catalyses the reaction L-aspartate 4-semialdehyde + pyruvate = (2S,4S)-4-hydroxy-2,3,4,5-tetrahydrodipicolinate + H2O + H(+). It participates in amino-acid biosynthesis; L-lysine biosynthesis via DAP pathway; (S)-tetrahydrodipicolinate from L-aspartate: step 3/4. Its function is as follows. Catalyzes the condensation of (S)-aspartate-beta-semialdehyde [(S)-ASA] and pyruvate to 4-hydroxy-tetrahydrodipicolinate (HTPA). The polypeptide is 4-hydroxy-tetrahydrodipicolinate synthase (Nitrobacter hamburgensis (strain DSM 10229 / NCIMB 13809 / X14)).